The sequence spans 454 residues: tRNA(Ile)-lysidine synthase (454 aa).

Position 27–32 (27–32 (SGGSDS)) interacts with ATP.

It belongs to the tRNA(Ile)-lysidine synthase family.

The protein localises to the cytoplasm. The enzyme catalyses cytidine(34) in tRNA(Ile2) + L-lysine + ATP = lysidine(34) in tRNA(Ile2) + AMP + diphosphate + H(+). Its function is as follows. Ligates lysine onto the cytidine present at position 34 of the AUA codon-specific tRNA(Ile) that contains the anticodon CAU, in an ATP-dependent manner. Cytidine is converted to lysidine, thus changing the amino acid specificity of the tRNA from methionine to isoleucine. The sequence is that of tRNA(Ile)-lysidine synthase from Mesorhizobium japonicum (strain LMG 29417 / CECT 9101 / MAFF 303099) (Mesorhizobium loti (strain MAFF 303099)).